The primary structure comprises 288 residues: Galactose/N-acetyl-D-galactosamine lectin light subunit 1 (288 aa).

Residues 1–15 (MIILVLLISYSFGKT) form the signal peptide. 2 N-linked (GlcNAc...) asparagine glycosylation sites follow: Asn-205 and Asn-261.

Heterodimer composed of a 170 kDa heavy subunit (hgl) and a 31/35 kDa light subunit (lgl); disulfide-linked.

Its subcellular location is the cell membrane. Its function is as follows. Light subunit of a heterodimeric lectin; the heavy subunit binds galactose and N-acetyl-D-galactosamine of host glycoproteins and thus mediates adhesion to host cells. This is Galactose/N-acetyl-D-galactosamine lectin light subunit 1 from Entamoeba histolytica (strain ATCC 30459 / HM-1:IMSS / ABRM).